Reading from the N-terminus, the 402-residue chain is Acetyl-CoA acetyltransferase (402 aa).

Cys-90 serves as the catalytic Acyl-thioester intermediate. Residues Tyr-185 and Lys-230 each coordinate CoA. Tyr-185 serves as a coordination point for K(+). Ala-250 contacts K(+). Ser-251 is a binding site for CoA. Residue Val-348 coordinates K(+). Catalysis depends on proton acceptor residues His-352 and Cys-382.

It belongs to the thiolase-like superfamily. Thiolase family. In terms of assembly, homotetramer.

The protein localises to the cytoplasm. Its subcellular location is the cytosol. The enzyme catalyses 2 acetyl-CoA = acetoacetyl-CoA + CoA. Its pathway is metabolic intermediate biosynthesis; (R)-mevalonate biosynthesis; (R)-mevalonate from acetyl-CoA: step 1/3. Acetyl-CoA acetyltransferase; part of the first module of ergosterol biosynthesis pathway that includes the early steps of the pathway, conserved across all eukaryotes, and which results in the formation of mevalonate from acetyl-coenzyme A (acetyl-CoA). ERG10 catalyzes the formation of acetoacetyl-CoA from acetyl-CoA. The first module starts with the action of the cytosolic acetyl-CoA acetyltransferase ERG10 that catalyzes the formation of acetoacetyl-CoA. The hydroxymethylglutaryl-CoA synthase ERG13 then condenses acetyl-CoA with acetoacetyl-CoA to form HMG-CoA. The 3-hydroxy-3-methylglutaryl-coenzyme A (HMG-CoA) reductase HMG1 finally reduces HMG-CoA to produce mevalonate. In Candida albicans (strain SC5314 / ATCC MYA-2876) (Yeast), this protein is Acetyl-CoA acetyltransferase.